The following is a 270-amino-acid chain: Putative pyruvate, phosphate dikinase regulatory protein 1 (270 aa).

ADP is bound at residue 151–158 (GVSRTSKT).

It belongs to the pyruvate, phosphate/water dikinase regulatory protein family. PDRP subfamily.

The enzyme catalyses N(tele)-phospho-L-histidyl/L-threonyl-[pyruvate, phosphate dikinase] + ADP = N(tele)-phospho-L-histidyl/O-phospho-L-threonyl-[pyruvate, phosphate dikinase] + AMP + H(+). It catalyses the reaction N(tele)-phospho-L-histidyl/O-phospho-L-threonyl-[pyruvate, phosphate dikinase] + phosphate + H(+) = N(tele)-phospho-L-histidyl/L-threonyl-[pyruvate, phosphate dikinase] + diphosphate. In terms of biological role, bifunctional serine/threonine kinase and phosphorylase involved in the regulation of the pyruvate, phosphate dikinase (PPDK) by catalyzing its phosphorylation/dephosphorylation. In Enterococcus faecalis (strain ATCC 700802 / V583), this protein is Putative pyruvate, phosphate dikinase regulatory protein 1.